The sequence spans 392 residues: Probable tRNA sulfurtransferase (392 aa).

Residues 59-166 (SCYREALKRV…DEGLFIYTTE (108 aa)) form the THUMP domain. Residues 186–187 (LL), 211–212 (YF), Arg269, Gly290, and Gln299 each bind ATP.

Belongs to the ThiI family.

Its subcellular location is the cytoplasm. The enzyme catalyses [ThiI sulfur-carrier protein]-S-sulfanyl-L-cysteine + a uridine in tRNA + 2 reduced [2Fe-2S]-[ferredoxin] + ATP + H(+) = [ThiI sulfur-carrier protein]-L-cysteine + a 4-thiouridine in tRNA + 2 oxidized [2Fe-2S]-[ferredoxin] + AMP + diphosphate. The catalysed reaction is [ThiS sulfur-carrier protein]-C-terminal Gly-Gly-AMP + S-sulfanyl-L-cysteinyl-[cysteine desulfurase] + AH2 = [ThiS sulfur-carrier protein]-C-terminal-Gly-aminoethanethioate + L-cysteinyl-[cysteine desulfurase] + A + AMP + 2 H(+). It functions in the pathway cofactor biosynthesis; thiamine diphosphate biosynthesis. Catalyzes the ATP-dependent transfer of a sulfur to tRNA to produce 4-thiouridine in position 8 of tRNAs, which functions as a near-UV photosensor. Also catalyzes the transfer of sulfur to the sulfur carrier protein ThiS, forming ThiS-thiocarboxylate. This is a step in the synthesis of thiazole, in the thiamine biosynthesis pathway. The sulfur is donated as persulfide by IscS. This chain is Probable tRNA sulfurtransferase, found in Coxiella burnetii (strain RSA 493 / Nine Mile phase I).